Here is a 118-residue protein sequence, read N- to C-terminus: Large ribosomal subunit protein bL19 (118 aa).

It belongs to the bacterial ribosomal protein bL19 family.

Functionally, this protein is located at the 30S-50S ribosomal subunit interface and may play a role in the structure and function of the aminoacyl-tRNA binding site. The polypeptide is Large ribosomal subunit protein bL19 (Onion yellows phytoplasma (strain OY-M)).